The sequence spans 68 residues: Large ribosomal subunit protein bL32 (68 aa).

It belongs to the bacterial ribosomal protein bL32 family.

This Orientia tsutsugamushi (strain Ikeda) (Rickettsia tsutsugamushi) protein is Large ribosomal subunit protein bL32.